The primary structure comprises 380 residues: N-acetylneuraminate epimerase (380 aa).

The first 21 residues, 1–21 (MKFTKTALFTVLAATAFAAQA), serve as a signal peptide directing secretion. Kelch repeat units follow at residues 42-86 (TVYV…AGVN), 88-140 (KLYV…AADG), 142-176 (KIYF…AIFD), 177-222 (PYFN…AIKD), 225-274 (LLVV…IAGG), 296-349 (ANYE…SYNN), and 351-380 (VLLI…LTVE). The Proton acceptor role is filled by Glu-231.

Belongs to the NanM family. As to quaternary structure, homodimer.

The protein resides in the periplasm. The catalysed reaction is N-acetyl-alpha-neuraminate = N-acetyl-beta-neuraminate. Functionally, converts alpha-N-acetylneuranimic acid (Neu5Ac) to the beta-anomer, accelerating the equilibrium between the alpha- and beta-anomers. Probably facilitates sialidase-negative bacteria to compete successfully for limited amounts of extracellular Neu5Ac, which is likely taken up in the beta-anomer. In addition, the rapid removal of sialic acid from solution might be advantageous to the bacterium to damp down host responses. The polypeptide is N-acetylneuraminate epimerase (Pasteurella multocida (strain Pm70)).